Here is a 325-residue protein sequence, read N- to C-terminus: Heat-inducible transcription repressor HrcA (325 aa).

Belongs to the HrcA family.

Negative regulator of class I heat shock genes (grpE-dnaK-dnaJ and groELS operons). Prevents heat-shock induction of these operons. The chain is Heat-inducible transcription repressor HrcA from Staphylococcus haemolyticus (strain JCSC1435).